The primary structure comprises 582 residues: Bifunctional lycopene cyclase/phytoene synthase (582 aa).

A lycopene beta-cyclase region spans residues 1–261 (MNQNGTRLCY…VVLGLVGCDY (261 aa)). 6 helical membrane-spanning segments follow: residues 34–54 (CTYT…FFTA), 59–79 (KICI…SYLI), 99–121 (IPIE…YCIF), 142–162 (YVVA…LLLG), 170–190 (LILV…YPFL), and 242–262 (ALFF…CDYA). The phytoene synthase stretch occupies residues 268–582 (YESLSQPASD…LLSALVYRLE (315 aa)).

The protein in the N-terminal section; belongs to the lycopene beta-cyclase family. This sequence in the C-terminal section; belongs to the phytoene/squalene synthase family.

The protein resides in the membrane. The catalysed reaction is all-trans-lycopene = gamma-carotene. It catalyses the reaction gamma-carotene = all-trans-beta-carotene. It carries out the reaction 2 (2E,6E,10E)-geranylgeranyl diphosphate = 15-cis-phytoene + 2 diphosphate. Its pathway is carotenoid biosynthesis; beta-carotene biosynthesis. The protein operates within carotenoid biosynthesis; phytoene biosynthesis; all-trans-phytoene from geranylgeranyl diphosphate: step 1/1. Functionally, bifunctional enzyme that catalyzes the reactions from geranylgeranyl diphosphate to phytoene (phytoene synthase) and lycopene to beta-carotene via the intermediate gamma-carotene (lycopene cyclase). This is Bifunctional lycopene cyclase/phytoene synthase from Aspergillus niger (strain ATCC MYA-4892 / CBS 513.88 / FGSC A1513).